Consider the following 510-residue polypeptide: Tryptophan 6-hydroxylase fscE (510 aa).

The chain crosses the membrane as a helical span at residues 11–31 (LLPIEGVIILVFVLSCFSLAI). C452 is a heme binding site.

This sequence belongs to the cytochrome P450 family. Heme serves as cofactor.

Its subcellular location is the membrane. It functions in the pathway secondary metabolite biosynthesis. Tryptophan 6-hydroxylase; part of the fragmented gene cluster that mediates the biosynthesis of fusarochromene, a tryptophan-derived metabolite closely related to a group of mycotoxins including fusarochromanone. Within the pathway, fscE hydroxalates the first intermediate D-tryptophan to yield 6-hydroxytryptophan. The first step of the pathway is the epimerization of L-tryptophan to D-tryptophan in the presence of the NRPS-like tryptophan epimerase fscC. D-tryptophan is subsequently hydroxylated by the tryptophan 6-hydroxylase fscE to yield 6-hydroxytryptophan. The pyrrole ring undergoes cleavaged by the tryptophan 2,3-dioxygenase fscD and is finally converted to 4-hydroxykyrunenine by the hydrolase fscH. The NRPS-like oxidoreductase fscA reduces the carboxyl group to primary alcohol and the DMATS-type prenyltransferase fscG performs prenylation, followed by the formation of a chromene ring catalyzed by the oxidoreductase fscI, which leads to desacetylfusarochromene. Epoxidation by fscF and rearrangement reactions of chromene double bonds convert compound desacetylfusarochromene to fusarochromanones. Although specific acetyltransferases were not found near the fsc gene cluster, several predicted enzymes containing the N-acetyltransferase superfamily domain are present in the genome of F.equiseti. These predicted enzymes may have the potential to convert desacetylfusarochromene to fusarochromene. In Fusarium equiseti (Fusarium scirpi), this protein is Tryptophan 6-hydroxylase fscE.